The primary structure comprises 800 residues: DEP domain-containing protein 1A (800 aa).

The 85-residue stretch at 24–108 (FRAGMPLKKH…DNSQLYRFPS (85 aa)) folds into the DEP domain. Disordered regions lie at residues 147 to 173 (ETLE…RSRE), 306 to 326 (SQPG…AKNP), and 459 to 485 (INTS…ARAR). One can recognise a Rho-GAP domain in the interval 281 to 321 (PLLTYQYYELFVNILVMCGYITTPKSQPGKRKNQEEPNCPQ). Residues 459–468 (INTSGSSVSS) are compositionally biased toward low complexity.

The sequence is that of DEP domain-containing protein 1A (depdc1a) from Danio rerio (Zebrafish).